The chain runs to 123 residues: Small ribosomal subunit protein uS12cz/uS12cy (123 aa).

It belongs to the universal ribosomal protein uS12 family. As to quaternary structure, part of the 30S ribosomal subunit.

Its subcellular location is the plastid. The protein localises to the chloroplast. Its function is as follows. With S4 and S5 plays an important role in translational accuracy. Located at the interface of the 30S and 50S subunits. The sequence is that of Small ribosomal subunit protein uS12cz/uS12cy (rps12-A) from Nymphaea alba (White water-lily).